A 32-amino-acid chain; its full sequence is Photosystem I reaction center subunit XII (32 aa).

A helical transmembrane segment spans residues 10-27 (VVALVSAFVTGILALRLG).

The protein belongs to the PsaM family.

It localises to the plastid. The protein localises to the chloroplast thylakoid membrane. This chain is Photosystem I reaction center subunit XII, found in Staurastrum punctulatum (Green alga).